A 418-amino-acid polypeptide reads, in one-letter code: Glucose-1-phosphate adenylyltransferase (418 aa).

Residues Y107, G172, 187-188, and S205 contribute to the alpha-D-glucose 1-phosphate site; that span reads EK.

Belongs to the bacterial/plant glucose-1-phosphate adenylyltransferase family. In terms of assembly, homotetramer.

It carries out the reaction alpha-D-glucose 1-phosphate + ATP + H(+) = ADP-alpha-D-glucose + diphosphate. The protein operates within glycan biosynthesis; glycogen biosynthesis. In terms of biological role, involved in the biosynthesis of ADP-glucose, a building block required for the elongation reactions to produce glycogen. Catalyzes the reaction between ATP and alpha-D-glucose 1-phosphate (G1P) to produce pyrophosphate and ADP-Glc. This is Glucose-1-phosphate adenylyltransferase from Gemmatimonas aurantiaca (strain DSM 14586 / JCM 11422 / NBRC 100505 / T-27).